Consider the following 186-residue polypeptide: A-type ATP synthase subunit E (186 aa).

The protein belongs to the V-ATPase E subunit family. As to quaternary structure, has multiple subunits with at least A(3), B(3), C, D, E, F, H, I and proteolipid K(x).

The protein resides in the cell membrane. In terms of biological role, component of the A-type ATP synthase that produces ATP from ADP in the presence of a proton gradient across the membrane. The chain is A-type ATP synthase subunit E from Methanocella arvoryzae (strain DSM 22066 / NBRC 105507 / MRE50).